A 152-amino-acid polypeptide reads, in one-letter code: Superoxide dismutase [Cu-Zn] 5 (152 aa).

Histidine 44, histidine 46, and histidine 61 together coordinate Cu cation. Cysteine 55 and cysteine 144 are disulfide-bonded. 4 residues coordinate Zn(2+): histidine 61, histidine 69, histidine 78, and aspartate 81. Position 118 (histidine 118) interacts with Cu cation.

The protein belongs to the Cu-Zn superoxide dismutase family. The cofactor is Cu cation. It depends on Zn(2+) as a cofactor.

The catalysed reaction is 2 superoxide + 2 H(+) = H2O2 + O2. Destroys radicals which are normally produced within the cells and which are toxic to biological systems. The sequence is that of Superoxide dismutase [Cu-Zn] 5 (sodE) from Dictyostelium discoideum (Social amoeba).